The primary structure comprises 150 residues: Anthrone oxygenase gedH (150 aa).

4 helical membrane-spanning segments follow: residues 1 to 21 (MANP…PVFL), 41 to 61 (GHKL…WVAA), 73 to 93 (PVLA…CMVS), and 128 to 148 (LFPL…LVGG).

It belongs to the anthrone oxygenase family.

The protein resides in the membrane. It catalyses the reaction emodin anthrone + O2 = emodin + H2O + H(+). The protein operates within secondary metabolite biosynthesis. In terms of biological role, anthrone oxygenase; part of the gene cluster that mediates the biosynthesis of geodin, an intermediate in the biosynthesis of other natural products. The pathway begins with the synthesis of atrochrysone thioester by the polyketide synthase (PKS) gedC. The atrochrysone carboxyl ACP thioesterase gedB then breaks the thioester bond and releases the atrochrysone carboxylic acid from gedC. The atrochrysone carboxylic acid is then converted to atrochrysone which is further transformed into emodin anthrone. The next step is performed by the emodin anthrone oxygenase gedH that catalyzes the oxidation of emodinanthrone to emodin. Emodin O-methyltransferase encoded probably by gedA then catalyzes methylation of the 8-hydroxy group of emodin to form questin. Ring cleavage of questin by questin oxidase gedK leads to desmethylsulochrin via several intermediates including questin epoxide. Another methylation step probably catalyzed by methyltransferase gedG leads to the formation of sulochrin which is further converted to dihydrogeodin by the sulochrin halogenase gedL. Finally, the dihydrogeodin oxidase gedJ catalyzes the stereospecific phenol oxidative coupling reaction converting dihydrogeodin to geodin. The polypeptide is Anthrone oxygenase gedH (Aspergillus terreus (strain NIH 2624 / FGSC A1156)).